We begin with the raw amino-acid sequence, 193 residues long: Acyl carrier protein phosphodiesterase (193 aa).

It belongs to the AcpH family.

The enzyme catalyses holo-[ACP] + H2O = apo-[ACP] + (R)-4'-phosphopantetheine + H(+). Its function is as follows. Converts holo-ACP to apo-ACP by hydrolytic cleavage of the phosphopantetheine prosthetic group from ACP. The polypeptide is Acyl carrier protein phosphodiesterase (Salmonella choleraesuis (strain SC-B67)).